Here is a 122-residue protein sequence, read N- to C-terminus: Small ribosomal subunit protein uS13 (122 aa).

Residues 94–122 (LSLPVRGQRTKTNSRTRKGKRKTVAGKKK) are disordered. The span at 101-122 (QRTKTNSRTRKGKRKTVAGKKK) shows a compositional bias: basic residues.

This sequence belongs to the universal ribosomal protein uS13 family. As to quaternary structure, part of the 30S ribosomal subunit. Forms a loose heterodimer with protein S19. Forms two bridges to the 50S subunit in the 70S ribosome.

Its function is as follows. Located at the top of the head of the 30S subunit, it contacts several helices of the 16S rRNA. In the 70S ribosome it contacts the 23S rRNA (bridge B1a) and protein L5 of the 50S subunit (bridge B1b), connecting the 2 subunits; these bridges are implicated in subunit movement. Contacts the tRNAs in the A and P-sites. In Chlamydia trachomatis serovar A (strain ATCC VR-571B / DSM 19440 / HAR-13), this protein is Small ribosomal subunit protein uS13.